Here is a 224-residue protein sequence, read N- to C-terminus: NADH-quinone oxidoreductase subunit B (224 aa).

4 residues coordinate [4Fe-4S] cluster: C67, C68, C133, and C162. The tract at residues 200–224 (DMPAEKDRKRGERIKVTNLRTPDEI) is disordered. Over residues 201 to 224 (MPAEKDRKRGERIKVTNLRTPDEI) the composition is skewed to basic and acidic residues.

This sequence belongs to the complex I 20 kDa subunit family. NDH-1 is composed of 14 different subunits. Subunits NuoB, C, D, E, F, and G constitute the peripheral sector of the complex. It depends on [4Fe-4S] cluster as a cofactor.

The protein resides in the cell inner membrane. The enzyme catalyses a quinone + NADH + 5 H(+)(in) = a quinol + NAD(+) + 4 H(+)(out). Functionally, NDH-1 shuttles electrons from NADH, via FMN and iron-sulfur (Fe-S) centers, to quinones in the respiratory chain. The immediate electron acceptor for the enzyme in this species is believed to be ubiquinone. Couples the redox reaction to proton translocation (for every two electrons transferred, four hydrogen ions are translocated across the cytoplasmic membrane), and thus conserves the redox energy in a proton gradient. This Aeromonas salmonicida (strain A449) protein is NADH-quinone oxidoreductase subunit B.